The primary structure comprises 120 residues: Myohemerythrin (120 aa).

The Fe cation site is built by histidine 26, histidine 56, glutamate 60, histidine 75, histidine 79, histidine 108, and aspartate 113.

It belongs to the hemerythrin family.

Its function is as follows. Myohemerythrin is an oxygen-binding protein found in the retractor muscles of certain worms. The oxygen-binding site contains two iron atoms. The polypeptide is Myohemerythrin (Sipunculus nudus (Sipunculan worm)).